The following is a 1351-amino-acid chain: D-lysergyl-peptide-synthetase subunit 2 (1351 aa).

The adenylation (A) domain stretch occupies residues 285–684 (RCLSQPTASA…GRKDTQVKLR (400 aa)). Residues 828-904 (APQTTTEKLL…ALACVVRSGK (77 aa)) enclose the Carrier domain. Residue S865 is modified to O-(pantetheine 4'-phosphoryl)serine. Residues 941–1340 (EDVYPCTPLQ…LIRDILAVPQ (400 aa)) form a condensation (C) domain region.

Belongs to the NRP synthetase family.

Its pathway is alkaloid biosynthesis; ergot alkaloid biosynthesis. In terms of biological role, D-lysergyl-peptide-synthetase subunit 2; part of the gene cluster that mediates the biosynthesis of fungal ergot alkaloid ergovaline, the predominant ergopeptine product in E.festucae var. lolii. DmaW catalyzes the first step of ergot alkaloid biosynthesis by condensing dimethylallyl diphosphate (DMAP) and tryptophan to form 4-dimethylallyl-L-tryptophan. The second step is catalyzed by the methyltransferase easF that methylates 4-dimethylallyl-L-tryptophan in the presence of S-adenosyl-L-methionine, resulting in the formation of 4-dimethylallyl-L-abrine. The catalase easC and the FAD-dependent oxidoreductase easE then transform 4-dimethylallyl-L-abrine to chanoclavine-I which is further oxidized by easD in the presence of NAD(+), resulting in the formation of chanoclavine-I aldehyde. Agroclavine dehydrogenase easG then mediates the conversion of chanoclavine-I aldehyde to agroclavine via a non-enzymatic adduct reaction: the substrate is an iminium intermediate that is formed spontaneously from chanoclavine-I aldehyde in the presence of glutathione. The presence of easA is not required to complete this reaction. Further conversion of agroclavine to paspalic acid is a two-step process involving oxidation of agroclavine to elymoclavine and of elymoclavine to paspalic acid, the second step being performed by the elymoclavine oxidase cloA. Paspalic acid is then further converted to D-lysergic acid. Ergovaline is assembled from D-lysergic acid and three different amino acids by the D-lysergyl-peptide-synthetase composed of a monomudular (lpsB) and a trimodular (lpsA) nonribosomal peptide synthetase subunit. The protein is D-lysergyl-peptide-synthetase subunit 2 of Epichloe festucae var. lolii (Neotyphodium lolii).